The sequence spans 378 residues: Endopolygalacturonase I (378 aa).

A signal peptide spans 1–20 (MHLNTTLLVSLALGAASVLA). Positions 21-39 (SPAPPAITAPPTAEEIAKR) are excised as a propeptide. Cysteines 43 and 61 form a disulfide. Residue T44 is glycosylated (O-linked (Man...) threonine). 7 O-linked (Man...) serine glycosylation sites follow: S46, S48, S52, S53, S55, S57, and S62. The O-linked (Man...) threonine glycan is linked to T63. S73 carries O-linked (Man...) serine glycosylation. 5 PbH1 repeats span residues 174–204 (SDYLTLKDITIDNSDGDDNGGHNTDAFDIGT), 205–226 (STYVTISGATVYNQDDCVAVNS), 227–247 (GENIYFSGGYCSGGHGLSIGS), 256–277 (VKNVTFVDSTIINSDNGVRIKT), and 285–307 (VSDVTYKDITLTSIAKYGIVVQQ). D219 serves as the catalytic Proton donor. C221 and C237 are oxidised to a cystine. H241 is a catalytic residue. N-linked (GlcNAc...) asparagine glycosylation occurs at N258. 2 disulfides stabilise this stretch: C345–C350 and C369–C378.

This sequence belongs to the glycosyl hydrolase 28 family.

The protein resides in the secreted. It catalyses the reaction (1,4-alpha-D-galacturonosyl)n+m + H2O = (1,4-alpha-D-galacturonosyl)n + (1,4-alpha-D-galacturonosyl)m.. Its function is as follows. Involved in maceration and soft-rotting of plant tissue. Hydrolyzes the 1,4-alpha glycosidic bonds of de-esterified pectate in the smooth region of the plant cell wall. This chain is Endopolygalacturonase I (pgaI), found in Aspergillus aculeatus.